We begin with the raw amino-acid sequence, 329 residues long: Lipoyl synthase (329 aa).

Positions 55, 60, 66, 81, 85, 88, and 292 each coordinate [4Fe-4S] cluster. The region spanning 67 to 281 (WEDREATFLI…RDEAEAIGFL (215 aa)) is the Radical SAM core domain.

This sequence belongs to the radical SAM superfamily. Lipoyl synthase family. [4Fe-4S] cluster is required as a cofactor.

The protein localises to the cytoplasm. It catalyses the reaction [[Fe-S] cluster scaffold protein carrying a second [4Fe-4S](2+) cluster] + N(6)-octanoyl-L-lysyl-[protein] + 2 oxidized [2Fe-2S]-[ferredoxin] + 2 S-adenosyl-L-methionine + 4 H(+) = [[Fe-S] cluster scaffold protein] + N(6)-[(R)-dihydrolipoyl]-L-lysyl-[protein] + 4 Fe(3+) + 2 hydrogen sulfide + 2 5'-deoxyadenosine + 2 L-methionine + 2 reduced [2Fe-2S]-[ferredoxin]. The protein operates within protein modification; protein lipoylation via endogenous pathway; protein N(6)-(lipoyl)lysine from octanoyl-[acyl-carrier-protein]: step 2/2. Catalyzes the radical-mediated insertion of two sulfur atoms into the C-6 and C-8 positions of the octanoyl moiety bound to the lipoyl domains of lipoate-dependent enzymes, thereby converting the octanoylated domains into lipoylated derivatives. The chain is Lipoyl synthase from Leifsonia xyli subsp. xyli (strain CTCB07).